We begin with the raw amino-acid sequence, 119 residues long: Large ribosomal subunit protein bL20 (119 aa).

It belongs to the bacterial ribosomal protein bL20 family.

Binds directly to 23S ribosomal RNA and is necessary for the in vitro assembly process of the 50S ribosomal subunit. It is not involved in the protein synthesizing functions of that subunit. The protein is Large ribosomal subunit protein bL20 of Enterococcus faecalis (strain ATCC 700802 / V583).